We begin with the raw amino-acid sequence, 204 residues long: Ribonuclease HII (204 aa).

One can recognise an RNase H type-2 domain in the interval 17-204 (TLIAGVDEVG…KPVKKVLGLL (188 aa)). A divalent metal cation-binding residues include D23, E24, and D115.

Belongs to the RNase HII family. Mn(2+) serves as cofactor. It depends on Mg(2+) as a cofactor.

It localises to the cytoplasm. It carries out the reaction Endonucleolytic cleavage to 5'-phosphomonoester.. In terms of biological role, endonuclease that specifically degrades the RNA of RNA-DNA hybrids. The sequence is that of Ribonuclease HII from Psychromonas ingrahamii (strain DSM 17664 / CCUG 51855 / 37).